The chain runs to 104 residues: Large ribosomal subunit protein uL24 (104 aa).

The protein belongs to the universal ribosomal protein uL24 family. In terms of assembly, part of the 50S ribosomal subunit.

Functionally, one of two assembly initiator proteins, it binds directly to the 5'-end of the 23S rRNA, where it nucleates assembly of the 50S subunit. Its function is as follows. One of the proteins that surrounds the polypeptide exit tunnel on the outside of the subunit. This Yersinia pseudotuberculosis serotype O:1b (strain IP 31758) protein is Large ribosomal subunit protein uL24.